We begin with the raw amino-acid sequence, 294 residues long: 4-hydroxy-tetrahydrodipicolinate synthase (294 aa).

Residue Thr-45 participates in pyruvate binding. The active-site Proton donor/acceptor is the Tyr-133. Residue Lys-162 is the Schiff-base intermediate with substrate of the active site. Position 204 (Ile-204) interacts with pyruvate.

The protein belongs to the DapA family. As to quaternary structure, homotetramer; dimer of dimers.

The protein localises to the cytoplasm. It carries out the reaction L-aspartate 4-semialdehyde + pyruvate = (2S,4S)-4-hydroxy-2,3,4,5-tetrahydrodipicolinate + H2O + H(+). Its pathway is amino-acid biosynthesis; L-lysine biosynthesis via DAP pathway; (S)-tetrahydrodipicolinate from L-aspartate: step 3/4. Its function is as follows. Catalyzes the condensation of (S)-aspartate-beta-semialdehyde [(S)-ASA] and pyruvate to 4-hydroxy-tetrahydrodipicolinate (HTPA). The protein is 4-hydroxy-tetrahydrodipicolinate synthase of Bartonella henselae (strain ATCC 49882 / DSM 28221 / CCUG 30454 / Houston 1) (Rochalimaea henselae).